Consider the following 552-residue polypeptide: Phosphoribosylaminoimidazole carboxylase (552 aa).

The 188-residue stretch at 108–295 (KQHLQVFKIA…QFEAHLRAIC (188 aa)) folds into the ATP-grasp domain. 134 to 189 (GQEFGYPFVLKSKTLAYDGRGNYVVHQPSEIPTAIKALGDRPLYVEKFVPFSMEIA) is a binding site for ATP.

This sequence in the C-terminal section; belongs to the AIR carboxylase family. Class I subfamily.

The enzyme catalyses 5-amino-1-(5-phospho-D-ribosyl)imidazole-4-carboxylate + H(+) = 5-amino-1-(5-phospho-beta-D-ribosyl)imidazole + CO2. Its pathway is purine metabolism; IMP biosynthesis via de novo pathway; 5-amino-1-(5-phospho-D-ribosyl)imidazole-4-carboxylate from 5-amino-1-(5-phospho-D-ribosyl)imidazole (carboxylase route): step 1/1. In Schizosaccharomyces pombe (strain 972 / ATCC 24843) (Fission yeast), this protein is Phosphoribosylaminoimidazole carboxylase (ade6).